Reading from the N-terminus, the 289-residue chain is RNA-binding protein CP31B, chloroplastic (289 aa).

Residues 1 to 71 constitute a chloroplast transit peptide; sequence MTSSVLTPSL…NSSPVVTFVS (71 aa). 2 RRM domains span residues 113–191 and 207–285; these read AKLF…RAAP and FRIY…VAEE.

Post-translationally, ADP-ribosylated by the Pseudomonas syringae type III effector HopU1. ADP-ribosylation reduces the ability of the protein to bind RNA.

The protein localises to the plastid. It localises to the chloroplast. Its function is as follows. Required for specific RNA editing events in chloroplasts and stabilizes specific chloroplast mRNAs. In Arabidopsis thaliana (Mouse-ear cress), this protein is RNA-binding protein CP31B, chloroplastic.